Consider the following 242-residue polypeptide: ATP synthase subunit a, organellar chromatophore (242 aa).

5 helical membrane passes run 28-48 (LHGQVFISSWVVISALLVLVI), 89-109 (LPFIGTLFLFIFGCNWGGALV), 128-148 (INTTVAMALLVSLSYFYAGLS), 193-213 (LVVGVLAFLVPILVPLPAMFL), and 214-234 (GLFTSAIQALIFATLAANYIG).

The protein belongs to the ATPase A chain family. As to quaternary structure, F-type ATPases have 2 components, CF(1) - the catalytic core - and CF(0) - the membrane proton channel. CF(1) has five subunits: alpha(3), beta(3), gamma(1), delta(1), epsilon(1). CF(0) has four main subunits: a, b, b' and c.

It localises to the plastid. Its subcellular location is the organellar chromatophore thylakoid membrane. Its function is as follows. Key component of the proton channel; it plays a direct role in the translocation of protons across the membrane. In Paulinella chromatophora, this protein is ATP synthase subunit a, organellar chromatophore.